A 329-amino-acid polypeptide reads, in one-letter code: GTP 3',8-cyclase (329 aa).

A Radical SAM core domain is found at 8 to 234 (AFARKFYYLR…QLRQRSDGPA (227 aa)). R17 lines the GTP pocket. Residues C24 and C28 each contribute to the [4Fe-4S] cluster site. Position 30 (Y30) interacts with S-adenosyl-L-methionine. C31 provides a ligand contact to [4Fe-4S] cluster. R68 serves as a coordination point for GTP. Position 72 (G72) interacts with S-adenosyl-L-methionine. T99 is a GTP binding site. S123 lines the S-adenosyl-L-methionine pocket. K160 contacts GTP. M194 lines the S-adenosyl-L-methionine pocket. The [4Fe-4S] cluster site is built by C257 and C260. 262-264 (RLR) contacts GTP. C274 contributes to the [4Fe-4S] cluster binding site.

Belongs to the radical SAM superfamily. MoaA family. Monomer and homodimer. It depends on [4Fe-4S] cluster as a cofactor.

The enzyme catalyses GTP + AH2 + S-adenosyl-L-methionine = (8S)-3',8-cyclo-7,8-dihydroguanosine 5'-triphosphate + 5'-deoxyadenosine + L-methionine + A + H(+). It functions in the pathway cofactor biosynthesis; molybdopterin biosynthesis. Catalyzes the cyclization of GTP to (8S)-3',8-cyclo-7,8-dihydroguanosine 5'-triphosphate. This chain is GTP 3',8-cyclase, found in Shigella boydii serotype 18 (strain CDC 3083-94 / BS512).